The chain runs to 358 residues: Protein SRG1 (358 aa).

The 101-residue stretch at 209 to 309 (SVQSMRMNYY…RLSIATFHNV (101 aa)) folds into the Fe2OG dioxygenase domain. Fe cation contacts are provided by His233, Asp235, and His290.

Belongs to the iron/ascorbate-dependent oxidoreductase family. In terms of tissue distribution, low expression in roots and leaves.

The chain is Protein SRG1 (SRG1) from Arabidopsis thaliana (Mouse-ear cress).